The sequence spans 473 residues: Cysteine--tRNA ligase (473 aa).

Residue C29 coordinates Zn(2+). The short motif at 31 to 41 (PTVYDRAHLGN) is the 'HIGH' region element. The Zn(2+) site is built by C225, H250, and E254. The short motif at 281–285 (KMSKS) is the 'KMSKS' region element. K284 is a binding site for ATP.

The protein belongs to the class-I aminoacyl-tRNA synthetase family. In terms of assembly, monomer. The cofactor is Zn(2+).

It localises to the cytoplasm. The catalysed reaction is tRNA(Cys) + L-cysteine + ATP = L-cysteinyl-tRNA(Cys) + AMP + diphosphate. The sequence is that of Cysteine--tRNA ligase from Roseobacter denitrificans (strain ATCC 33942 / OCh 114) (Erythrobacter sp. (strain OCh 114)).